A 32-amino-acid chain; its full sequence is Delta-conotoxin-like CnVIB (32 aa).

3 disulfides stabilise this stretch: cysteine 3–cysteine 18, cysteine 10–cysteine 22, and cysteine 17–cysteine 27. 4-hydroxyproline is present on residues proline 6 and proline 14.

Belongs to the conotoxin O1 superfamily. As to expression, expressed by the venom duct.

It is found in the secreted. Delta-conotoxins bind to site 6 of voltage-gated sodium channels (Nav) and inhibit the inactivation process. This toxin acts on Nav1.4/SCN4A and Nav1.6/SCN8A (EC(50)=2.3 uM). This chain is Delta-conotoxin-like CnVIB, found in Conus consors (Singed cone).